A 585-amino-acid polypeptide reads, in one-letter code: Epithelial sodium channel subunit gamma (585 aa).

At 1-55 (MAPGEKIKAKIKKNLPVTGPQAPTIKELMRWYCLNTNTHGCRRIVVSRGRLRRLL) the chain is on the cytoplasmic side. The chain crosses the membrane as a helical span at residues 56–76 (WIGFTLTAVALILWQCALLVF). The Extracellular portion of the chain corresponds to 77–477 (SFYTVSVSIK…GGQLGLWMSC (401 aa)). 6 cysteine pairs are disulfide-bonded: Cys100/Cys219, Cys308/Cys393, Cys330/Cys389, Cys334/Cys385, Cys343/Cys370, and Cys345/Cys359. N-linked (GlcNAc...) asparagine glycosylation is present at Asn207. Asn433 carries N-linked (GlcNAc...) asparagine glycosylation. Residues 478-498 (SVVCVIEIIEVFFIDFFSIIA) form a helical membrane-spanning segment. The Cytoplasmic portion of the chain corresponds to 499-585 (RRQWQKAKEW…LTDTQMLDEL (87 aa)). A disordered region spans residues 513-534 (QAPPCPEAPRSPQGQDNPALDI). Residues 559-563 (PPPKY) carry the PY motif; recruits WW domain-containing proteins and is thereby required for ubiquitination and inhibition of the channel by NEDD4 and NEDD4L motif.

It belongs to the amiloride-sensitive sodium channel (TC 1.A.6) family. SCNN1G subfamily. As to quaternary structure, component of the heterotrimeric epithelial sodium channel (ENaC) composed of an alpha/SCNN1A, a beta/SCNN1B and a gamma/SCNN1G subunit. An additional delta/SCNN1D subunit can replace the alpha/SCNN1A subunit to form an alternative channel with specific properties. Interacts with WWP1 (via WW domains). Interacts with WWP2 (via WW domains); inhibits the channel. Interacts with the full-length immature form of PCSK9 (pro-PCSK9); inhibits ENaC by promoting its proteasomal degradation. Interacts with BPIFA1; the interaction is indirect via SCNN1B and inhibits the proteolytic maturation of SCNN1A and SCNN1G and the activation of ENaC. Phosphorylated on serine and threonine residues. Aldosterone and insulin increase the basal level of phosphorylation. In terms of processing, ubiquitinated. Can be ubiquitinated at multiple sites and undergo monoubiquitination and polyubiquitination. Ubiquitination by NEDD4 or NEDD4L inhibits the ENaC channel through endocytosis, intracellular retention and degradation of its individual subunits. Post-translationally, ENaC is activated through the proteolytic maturation of its subunits. Furin cleaves the SCNN1G subunit first, followed by cleavage by prostasin (PRSS8), which results in a stepwise increase in the open probability of the channel due to the release of an inhibitory tract. BPIFA1, which is recruited by the SCNN1B subunit, prevents the proteolytic activation of ENaC. N-glycosylated. N-linked glycans are processed to complex type during ENaC complex assembly and transport to the plasma membrane.

It is found in the apical cell membrane. The catalysed reaction is Na(+)(in) = Na(+)(out). With respect to regulation, originally identified and characterized by its inhibition by the diuretic drug amiloride. Its function is as follows. This is one of the three pore-forming subunits of the heterotrimeric epithelial sodium channel (ENaC), a critical regulator of sodium balance and fluid homeostasis. ENaC operates in epithelial tissues, where it mediates the electrodiffusion of sodium ions from extracellular fluid through the apical membrane of cells, with water following osmotically. It plays a key role in maintaining sodium homeostasis through electrogenic sodium reabsorption in the kidneys. Additionally, ENaC is essential for airway surface liquid homeostasis, which is crucial for proper mucus clearance. The polypeptide is Epithelial sodium channel subunit gamma (Pan troglodytes (Chimpanzee)).